Consider the following 197-residue polypeptide: Imidazoleglycerol-phosphate dehydratase (197 aa).

This sequence belongs to the imidazoleglycerol-phosphate dehydratase family.

It localises to the cytoplasm. It carries out the reaction D-erythro-1-(imidazol-4-yl)glycerol 3-phosphate = 3-(imidazol-4-yl)-2-oxopropyl phosphate + H2O. Its pathway is amino-acid biosynthesis; L-histidine biosynthesis; L-histidine from 5-phospho-alpha-D-ribose 1-diphosphate: step 6/9. The polypeptide is Imidazoleglycerol-phosphate dehydratase (Nitrosococcus oceani (strain ATCC 19707 / BCRC 17464 / JCM 30415 / NCIMB 11848 / C-107)).